The primary structure comprises 393 residues: Asparagine--oxo-acid transaminase (393 aa).

Positions 39, 126, and 176 each coordinate L-asparagine. Lys-239 bears the N6-(pyridoxal phosphate)lysine mark. Arg-370 contributes to the L-asparagine binding site.

It belongs to the class-I pyridoxal-phosphate-dependent aminotransferase family. The cofactor is pyridoxal 5'-phosphate.

The catalysed reaction is a 2-oxocarboxylate + L-asparagine = 2-oxosuccinamate + an L-alpha-amino acid. It catalyses the reaction L-asparagine + 2-oxoglutarate = 2-oxosuccinamate + L-glutamate. Its function is as follows. Catalyzes the transamination reaction between L-asparagine and 2-oxoglutarate to produce L-glutamate and 2-oxosuccinamate. Is not active with pyruvate as amine acceptor. May also use other amino acids as substrates. This Streptococcus mutans serotype c (strain ATCC 700610 / UA159) protein is Asparagine--oxo-acid transaminase.